Here is a 206-residue protein sequence, read N- to C-terminus: Undecaprenyl-diphosphatase (206 aa).

The next 5 helical transmembrane spans lie at 5–25 (YYWI…LIGG), 53–73 (FLSK…LLIF), 79–99 (IGIT…VSKY), 138–158 (VTLL…EAVL), and 164–184 (VYVG…GSWI).

Its subcellular location is the cell membrane. The catalysed reaction is di-trans,octa-cis-undecaprenyl diphosphate + H2O = di-trans,octa-cis-undecaprenyl phosphate + phosphate + H(+). In Sulfolobus acidocaldarius (strain ATCC 33909 / DSM 639 / JCM 8929 / NBRC 15157 / NCIMB 11770), this protein is Undecaprenyl-diphosphatase (sepP).